We begin with the raw amino-acid sequence, 125 residues long: Large ribosomal subunit protein bL20 (125 aa).

This sequence belongs to the bacterial ribosomal protein bL20 family.

Functionally, binds directly to 23S ribosomal RNA and is necessary for the in vitro assembly process of the 50S ribosomal subunit. It is not involved in the protein synthesizing functions of that subunit. This is Large ribosomal subunit protein bL20 from Methylobacterium radiotolerans (strain ATCC 27329 / DSM 1819 / JCM 2831 / NBRC 15690 / NCIMB 10815 / 0-1).